A 54-amino-acid polypeptide reads, in one-letter code: Ribulose bisphosphate carboxylase large chain (54 aa).

A propeptide spanning residues 1–2 (MS) is cleaved from the precursor. N-acetylproline is present on proline 3. Lysine 14 bears the N6,N6,N6-trimethyllysine mark.

It belongs to the RuBisCO large chain family. Type I subfamily. Heterohexadecamer of 8 large chains and 8 small chains.

The protein localises to the plastid. Its subcellular location is the chloroplast. It carries out the reaction 2 (2R)-3-phosphoglycerate + 2 H(+) = D-ribulose 1,5-bisphosphate + CO2 + H2O. It catalyses the reaction D-ribulose 1,5-bisphosphate + O2 = 2-phosphoglycolate + (2R)-3-phosphoglycerate + 2 H(+). RuBisCO catalyzes two reactions: the carboxylation of D-ribulose 1,5-bisphosphate, the primary event in carbon dioxide fixation, as well as the oxidative fragmentation of the pentose substrate in the photorespiration process. Both reactions occur simultaneously and in competition at the same active site. This chain is Ribulose bisphosphate carboxylase large chain (rbcL), found in Rhamnus cathartica (Common buckthorn).